A 469-amino-acid polypeptide reads, in one-letter code: 3-isopropylmalate dehydratase large subunit (469 aa).

Residues Cys-346, Cys-406, and Cys-409 each contribute to the [4Fe-4S] cluster site.

It belongs to the aconitase/IPM isomerase family. LeuC type 1 subfamily. In terms of assembly, heterodimer of LeuC and LeuD. [4Fe-4S] cluster serves as cofactor.

The catalysed reaction is (2R,3S)-3-isopropylmalate = (2S)-2-isopropylmalate. Its pathway is amino-acid biosynthesis; L-leucine biosynthesis; L-leucine from 3-methyl-2-oxobutanoate: step 2/4. In terms of biological role, catalyzes the isomerization between 2-isopropylmalate and 3-isopropylmalate, via the formation of 2-isopropylmaleate. The polypeptide is 3-isopropylmalate dehydratase large subunit (Lysinibacillus sphaericus (strain C3-41)).